A 193-amino-acid chain; its full sequence is Xanthine phosphoribosyltransferase (193 aa).

Residues leucine 20 and asparagine 27 each contribute to the xanthine site. 128 to 132 (ANGDA) lines the 5-phospho-alpha-D-ribose 1-diphosphate pocket. Lysine 156 provides a ligand contact to xanthine.

This sequence belongs to the purine/pyrimidine phosphoribosyltransferase family. Xpt subfamily. In terms of assembly, homodimer.

It localises to the cytoplasm. The catalysed reaction is XMP + diphosphate = xanthine + 5-phospho-alpha-D-ribose 1-diphosphate. It functions in the pathway purine metabolism; XMP biosynthesis via salvage pathway; XMP from xanthine: step 1/1. Functionally, converts the preformed base xanthine, a product of nucleic acid breakdown, to xanthosine 5'-monophosphate (XMP), so it can be reused for RNA or DNA synthesis. This is Xanthine phosphoribosyltransferase from Staphylococcus haemolyticus (strain JCSC1435).